A 427-amino-acid chain; its full sequence is Serine hydroxymethyltransferase (427 aa).

120–122 (GHI) serves as a coordination point for (6S)-5,6,7,8-tetrahydrofolate. K226 carries the post-translational modification N6-(pyridoxal phosphate)lysine.

It belongs to the SHMT family. In terms of assembly, homodimer. The cofactor is pyridoxal 5'-phosphate.

The protein localises to the cytoplasm. Its pathway is amino-acid biosynthesis; glycine biosynthesis; glycine from L-serine: step 1/1. In terms of biological role, catalyzes the reversible interconversion of serine and glycine with a modified folate serving as the one-carbon carrier. Also exhibits a pteridine-independent aldolase activity toward beta-hydroxyamino acids, producing glycine and aldehydes, via a retro-aldol mechanism. This is Serine hydroxymethyltransferase from Pyrococcus furiosus (strain ATCC 43587 / DSM 3638 / JCM 8422 / Vc1).